The sequence spans 467 residues: GTPase Obg (467 aa).

In terms of domain architecture, Obg spans 1 to 158; it reads MFYDEAKIFV…RWLRLELKLL (158 aa). The region spanning 159-333 is the OBG-type G domain; it reads ADVGLVGLPN…LIRATWERLQ (175 aa). GTP contacts are provided by residues 165-172, 190-194, 214-217, 285-288, and 314-316; these read GLPNAGKS, FTTLE, DLPG, NKMD, and SAA. 2 residues coordinate Mg(2+): Ser172 and Thr192. The OCT domain occupies 352 to 430; it reads TLDRSQERWE…VAGRELVWEP (79 aa).

Belongs to the TRAFAC class OBG-HflX-like GTPase superfamily. OBG GTPase family. As to quaternary structure, monomer. Mg(2+) serves as cofactor.

The protein localises to the cytoplasm. An essential GTPase which binds GTP, GDP and possibly (p)ppGpp with moderate affinity, with high nucleotide exchange rates and a fairly low GTP hydrolysis rate. Plays a role in control of the cell cycle, stress response, ribosome biogenesis and in those bacteria that undergo differentiation, in morphogenesis control. This chain is GTPase Obg, found in Thermomicrobium roseum (strain ATCC 27502 / DSM 5159 / P-2).